Reading from the N-terminus, the 159-residue chain is Transmembrane protein 42 (159 aa).

Transmembrane regions (helical) follow at residues 37–57, 59–79, 100–120, and 124–144; these read FWGVFNCLCAGSFGALAAASA, LAFGSEVSMGLCVLGIIVMAS, IASVTVTFSNILSSAFLGYVL, and CQEVLWWGGVFLILCGLTLIH.

The protein localises to the membrane. The sequence is that of Transmembrane protein 42 (TMEM42) from Pongo abelii (Sumatran orangutan).